The primary structure comprises 360 residues: G-protein coupled receptor 15 (360 aa).

At 1 to 33 (MDPEETSVYLDYYYATSPNSDIRETHSHVPYTS) the chain is on the extracellular side. A helical membrane pass occupies residues 34 to 54 (VFLPVFYTAVFLTGVLGNLVL). Residues 55-69 (MGALHFKPGSRRLID) lie on the Cytoplasmic side of the membrane. Residues 70 to 90 (IFIINLAASDFIFLVTLPLWV) form a helical membrane-spanning segment. At 91 to 120 (DKEASLGLWRTGSFLCKGSSYMISVNMHCS) the chain is on the extracellular side. The chain crosses the membrane as a helical span at residues 121–141 (VLLLTCMSVDRYLAIVWPVVS). The Cytoplasmic portion of the chain corresponds to 142 to 149 (RKFRRTDC). Residues 150–170 (AYVVCASIWFISCLLGLPTLL) form a helical membrane-spanning segment. Topologically, residues 171–192 (SRELTLIDDKPYCAEKKATPIK) are extracellular. A helical membrane pass occupies residues 193–213 (LIWSLVALIFTFFVPLLSIVT). The Cytoplasmic portion of the chain corresponds to 214–239 (CYCCIARKLCAHYQQSGKHNKKLKKS). The helical transmembrane segment at 240–260 (IKIIFIVVAAFLVSWLPFNTF) threads the bilayer. The Extracellular portion of the chain corresponds to 261–284 (KFLAIVSGLRQEHYLPSAILQLGM). A helical membrane pass occupies residues 285-305 (EVSGPLAFANSCVNPFIYYIF). The Cytoplasmic portion of the chain corresponds to 306 to 360 (DSYIRRAIVHCLCPCLKNYDFGSSTETSDSHLTKALSTFIHAEDFARRRKRSVSL). Ser359 carries the phosphoserine modification.

Belongs to the G-protein coupled receptor 1 family. In terms of assembly, interacts with adapter YWHAE; this interaction promotes ER-to-Golgi transport of GPR15. Interacts with GNAI1; this interaction initiates the signaling pathway. In terms of processing, phosphorylation is necessary for YWHAE binding and efficient surface expression. O-glycosylated. Sialylated O-glycans in the N-terminal tail inhibits binding of GPR15LG. Post-translationally, sulfation is required for efficient binding of GPR15LG. Highly expressed in lymphoid tissues, including macrophages and peripheral blood mononuclear cells.

It is found in the cell membrane. Functionally, g protein-coupled receptor that plays an important role in immune homeostasis. Acts via its natural ligand GPR15LG, a chemokine-like polypeptide strongly expressed in gastrointestinal tissues. GPR15-GPR15LG signaling axis regulates intestinal homeostasis and inflammation through the migration of immune cells. Controls thereby the specific homing of T-cells, particularly FOXP3+ regulatory T-cells (Tregs), to the large intestine lamina propria. Also required for skin localization of thymus-derived dendritic epidermal T-cells. Plays an important role in mediating cytoprotective function as well as angiogenesis of thrombomodulin. Mechanistically, preferentially signals through the Gi/o pathway to inhibit adenylate cyclase activity and activate a phosphatidylinositol-calcium second messenger system that regulates the release of Ca(2+) ions from intracellular stores. Its function is as follows. (Microbial infection) Acts as an alternative coreceptor with CD4 for HIV-1 infection. The polypeptide is G-protein coupled receptor 15 (GPR15) (Homo sapiens (Human)).